The primary structure comprises 320 residues: MIKKIGVLTSGGDSPGMNAAIRGVVRAGLSEGLEVYGIYDGYLGLFQDRIAKLDRYSVSDMINRGGTFLGSARFPEFREEGTRAIAIENMTKRGLDALVVIGGDGSYMGAKRLTEMGFPCIGLPGTIDNDVAGTDYTIGYFTALETVVEAIDRLRDTSTSHQRISIVEVMGRYCGDLTMAAAIAGGCEFIVLPEVEFKPEDLVYEIKAGIAKGKKHAIVAITEYICNVAELAQYIEKETGRETRATVLGHIQRGGRPVAYDRILASLMGAYSIELLLQGYGGRCVGVQNERLVHHDIVDAIENMKRPFRSNILETAKKLF.

ATP is bound at residue Gly12. Residues Arg22 to Arg26 and Arg55 to Asp60 each bind ADP. ATP-binding positions include Arg73–Phe74 and Gly103–Ser106. Asp104 lines the Mg(2+) pocket. Residue Thr126 to Asp128 participates in substrate binding. The active-site Proton acceptor is Asp128. An ADP-binding site is contributed by Arg155. Residues Arg163 and Met170–Arg172 each bind substrate. Residues Gly186–Glu188, Lys212, and Lys214–His216 contribute to the ADP site. Substrate-binding positions include Glu223, Arg244, and His250 to Arg253.

The protein belongs to the phosphofructokinase type A (PFKA) family. ATP-dependent PFK group I subfamily. Prokaryotic clade 'B1' sub-subfamily. In terms of assembly, homotetramer. Mg(2+) is required as a cofactor.

It localises to the cytoplasm. It catalyses the reaction beta-D-fructose 6-phosphate + ATP = beta-D-fructose 1,6-bisphosphate + ADP + H(+). The protein operates within carbohydrate degradation; glycolysis; D-glyceraldehyde 3-phosphate and glycerone phosphate from D-glucose: step 3/4. Its activity is regulated as follows. Allosterically activated by ADP and other diphosphonucleosides, and allosterically inhibited by phosphoenolpyruvate. In terms of biological role, catalyzes the phosphorylation of D-fructose 6-phosphate to fructose 1,6-bisphosphate by ATP, the first committing step of glycolysis. The chain is ATP-dependent 6-phosphofructokinase from Sodalis glossinidius (strain morsitans).